The primary structure comprises 491 residues: NADH-quinone oxidoreductase subunit N 1 (491 aa).

The next 14 membrane-spanning stretches (helical) occupy residues Ile-9–Leu-29, Pro-38–Trp-58, Phe-76–Phe-96, Ser-104–Gly-124, Leu-126–Phe-146, Phe-161–Ala-181, Val-211–Ile-231, Ala-246–Ala-266, Phe-276–Ile-296, Leu-304–Gly-324, Ser-329–Val-349, Val-375–Phe-395, Ala-410–Ile-432, and Val-461–Ser-481.

The protein belongs to the complex I subunit 2 family. In terms of assembly, NDH-1 is composed of 14 different subunits. Subunits NuoA, H, J, K, L, M, N constitute the membrane sector of the complex.

The protein resides in the cell membrane. The enzyme catalyses a quinone + NADH + 5 H(+)(in) = a quinol + NAD(+) + 4 H(+)(out). Its function is as follows. NDH-1 shuttles electrons from NADH, via FMN and iron-sulfur (Fe-S) centers, to quinones in the respiratory chain. The immediate electron acceptor for the enzyme in this species is believed to be a menaquinone. Couples the redox reaction to proton translocation (for every two electrons transferred, four hydrogen ions are translocated across the cytoplasmic membrane), and thus conserves the redox energy in a proton gradient. This chain is NADH-quinone oxidoreductase subunit N 1, found in Symbiobacterium thermophilum (strain DSM 24528 / JCM 14929 / IAM 14863 / T).